Consider the following 168-residue polypeptide: DNA damage-inducible transcript 3 protein (168 aa).

Residues 10-18 (LETVSSWEL) form an interaction with TRIB3 region. Residues 10–26 (LETVSSWELEAWYEDLQ) are N-terminal. 4 positions are modified to phosphoserine; by CK2: serine 14, serine 15, serine 30, and serine 31. Residues 30–43 (SSDENGGPYSSSLG) show a composition bias toward polar residues. The tract at residues 30–168 (SSDENGGPYS…DRPHVNLQQV (139 aa)) is disordered. A compositionally biased stretch (low complexity) spans 74 to 87 (SSSQSPRSPDSSQS). 2 positions are modified to phosphoserine; by MAPK14: serine 78 and serine 81. The region spanning 98 to 161 (GRTRKRKQSG…EATRPGSDRP (64 aa)) is the bZIP domain. The segment at 101-129 (RKRKQSGQCPARGTGKQRMKEKEQENERK) is basic motif. Positions 118 to 162 (RMKEKEQENERKVAQLAEENERLKQEIERLTREVEATRPGSDRPH) are enriched in basic and acidic residues. A leucine-zipper region spans residues 133-147 (LAEENERLKQEIERL).

This sequence belongs to the bZIP family. Heterodimer. Interacts with TCF7L2/TCF4, EP300/P300, HDAC1, HDAC5 and HDAC6. Interacts with TRIB3 which blocks its association with EP300/P300. Interacts with FOXO3, CEBPB and ATF4. Post-translationally, ubiquitinated, leading to its degradation by the proteasome. Phosphorylation at serine residues by MAPK14 enhances its transcriptional activation activity while phosphorylation at serine residues by CK2 inhibits its transcriptional activation activity.

It localises to the cytoplasm. The protein localises to the nucleus. Multifunctional transcription factor in ER stress response. Plays an essential role in the response to a wide variety of cell stresses and induces cell cycle arrest and apoptosis in response to ER stress. Plays a dual role both as an inhibitor of CCAAT/enhancer-binding protein (C/EBP) function and as an activator of other genes. Acts as a dominant-negative regulator of C/EBP-induced transcription: dimerizes with members of the C/EBP family, impairs their association with C/EBP binding sites in the promoter regions, and inhibits the expression of C/EBP regulated genes. Positively regulates the transcription of TRIB3, IL6, IL8, IL23, TNFRSF10B/DR5, PPP1R15A/GADD34, BBC3/PUMA, BCL2L11/BIM and ERO1L. Negatively regulates; expression of BCL2 and MYOD1, ATF4-dependent transcriptional activation of asparagine synthetase (ASNS), CEBPA-dependent transcriptional activation of hepcidin (HAMP) and CEBPB-mediated expression of peroxisome proliferator-activated receptor gamma (PPARG). Inhibits the canonical Wnt signaling pathway by binding to TCF7L2/TCF4, impairing its DNA-binding properties and repressing its transcriptional activity. Plays a regulatory role in the inflammatory response through the induction of caspase-11 (CASP4/CASP11) which induces the activation of caspase-1 (CASP1) and both these caspases increase the activation of pro-IL1B to mature IL1B which is involved in the inflammatory response. The chain is DNA damage-inducible transcript 3 protein (DDIT3) from Cricetulus griseus (Chinese hamster).